Here is a 140-residue protein sequence, read N- to C-terminus: Putative septation protein SpoVG (140 aa).

The segment at 88–127 (VAPQAGGLQGAEEPTAVEPAPQLQDESELPWEPGDDGEGA) is disordered. The span at 112–124 (DESELPWEPGDDG) shows a compositional bias: acidic residues.

Belongs to the SpoVG family.

Functionally, could be involved in septation. The chain is Putative septation protein SpoVG from Symbiobacterium thermophilum (strain DSM 24528 / JCM 14929 / IAM 14863 / T).